Here is an 82-residue protein sequence, read N- to C-terminus: Cytochrome b559 subunit alpha (82 aa).

A helical membrane pass occupies residues 22-36 (VIHAITLPSIFLAGF). Residue H24 coordinates heme.

Belongs to the PsbE/PsbF family. As to quaternary structure, heterodimer of an alpha subunit and a beta subunit. PSII is composed of 1 copy each of membrane proteins PsbA, PsbB, PsbC, PsbD, PsbE, PsbF, PsbH, PsbI, PsbJ, PsbK, PsbL, PsbM, PsbT, PsbX, PsbY, PsbZ, Psb30/Ycf12, peripheral proteins PsbO, CyanoQ (PsbQ), PsbU, PsbV and a large number of cofactors. It forms dimeric complexes. The cofactor is heme b.

It is found in the cellular thylakoid membrane. Its function is as follows. This b-type cytochrome is tightly associated with the reaction center of photosystem II (PSII). PSII is a light-driven water:plastoquinone oxidoreductase that uses light energy to abstract electrons from H(2)O, generating O(2) and a proton gradient subsequently used for ATP formation. It consists of a core antenna complex that captures photons, and an electron transfer chain that converts photonic excitation into a charge separation. The sequence is that of Cytochrome b559 subunit alpha from Synechococcus sp. (strain WH7803).